A 174-amino-acid chain; its full sequence is Shikimate kinase 2 (174 aa).

12-17 (GAGKTT) provides a ligand contact to ATP. Mg(2+) is bound by residues T16 and D32. Residues D34, R58, and G79 each coordinate substrate. Residues 112 to 126 (MQQPESTQRPSLTGK) form an LID domain region. Position 120 (R120) interacts with ATP. R139 lines the substrate pocket.

This sequence belongs to the shikimate kinase family. AroL subfamily. As to quaternary structure, monomer. It depends on Mg(2+) as a cofactor.

Its subcellular location is the cytoplasm. It catalyses the reaction shikimate + ATP = 3-phosphoshikimate + ADP + H(+). Its pathway is metabolic intermediate biosynthesis; chorismate biosynthesis; chorismate from D-erythrose 4-phosphate and phosphoenolpyruvate: step 5/7. Functionally, catalyzes the specific phosphorylation of the 3-hydroxyl group of shikimic acid using ATP as a cosubstrate. The polypeptide is Shikimate kinase 2 (Photorhabdus laumondii subsp. laumondii (strain DSM 15139 / CIP 105565 / TT01) (Photorhabdus luminescens subsp. laumondii)).